Reading from the N-terminus, the 252-residue chain is MNKFLIIDGMNLVRRIHAAQPNESDITGLKERVNGACRKLLKFHQPSHAAIVWDGDAISWRKALFEDYKKGRKPMPEALANGLVELKAYLAEHQLNSINADSEADDVIATLATKLTSINGEAIIVSTDKGFCQLSHPNIKRWDHFNQGYLTIEEMEKKLGVESTQFIDYLALAGDSGNKIPGVPGIGPKSAVELLKIFRSLANIYNSIDKVGSKQAKKLEEGKQMARLSYKLVQLQTDLPLNVNLKQFRIEQ.

Asp105 serves as a coordination point for Mg(2+). The region spanning 161–251 (VESTQFIDYL…NVNLKQFRIE (91 aa)) is the 5'-3' exonuclease domain. 5 residues coordinate K(+): Leu172, Ala173, Pro181, Val183, and Ile186. Residues 185 to 190 (GIGPKS) are interaction with DNA.

Belongs to the Xni family. Mg(2+) serves as cofactor. K(+) is required as a cofactor.

In terms of biological role, has flap endonuclease activity. During DNA replication, flap endonucleases cleave the 5'-overhanging flap structure that is generated by displacement synthesis when DNA polymerase encounters the 5'-end of a downstream Okazaki fragment. The polypeptide is Flap endonuclease Xni (Shewanella halifaxensis (strain HAW-EB4)).